The primary structure comprises 456 residues: MGCGAGGSCTPRPPIRQQQAPETRVVAVVFLGLLLDLLAFTLLLPLLPGLLESHGRAHDPLYGSWQRGVDWFAAAIGMPAEKRYNSVLFGGLIGSVFSLLQFLSAPLTGALSDCLGRRPGMLLSLAGVATSYAVWAASKSFAAFLASRVIGGISKGNVSLCTAIVADLGSPSARSKGMAVIGVAFSLGFTLGPTLGAFLPSETVPWLALLFAVSDLLFIWCFLPETLPPEKRAPSVTLGFRAAADLLSPLALLRFSAVARGPDPPTGVRLGSLRGLGLVYFLYLFLFSGLEFTLSFLVHQRFRFSRVEQGKMFFFIGLTMATIQGAYARRIRPGREIAAVKQAILLLIPASLFVGWGHTLPILGLGLLLYSWAAAVVVPCLSSVVAGYGSPGQKGTVMGTLRSLGALARAVGPVVAASAYWLAGARVCYTVCAALFLLPFSILRTLSPPARTLKAE.

Helical transmembrane passes span 25–45 (VVAVVFLGLLLDLLAFTLLLP), 87–107 (VLFGGLIGSVFSLLQFLSAPL), 125–145 (LAGVATSYAVWAASKSFAAFL), 149–169 (VIGGISKGNVSLCTAIVADLG), 179–199 (AVIGVAFSLGFTLGPTLGAFL), 204–224 (VPWLALLFAVSDLLFIWCFLP), 278–298 (LVYFLYLFLFSGLEFTLSFLV), 311–328 (KMFFFIGLTMATIQGAYA), 343–363 (AILLLIPASLFVGWGHTLPIL), 365–385 (LGLLLYSWAAAVVVPCLSSVV), and 422–442 (LAGARVCYTVCAALFLLPFSI).

The protein belongs to the major facilitator superfamily.

It is found in the nucleus inner membrane. The protein resides in the cell membrane. Probable organic anion transporter which may serve as a transporter for some non-steroidal anti-inflammatory drugs (NSAIDs) as well as other organic anions across the luminal membranes of renal proximal tubules at the final excretion step into the urine. The chain is Major facilitator superfamily domain-containing protein 10 (MFSD10) from Bos taurus (Bovine).